A 1245-amino-acid polypeptide reads, in one-letter code: TAL effector protein Brg11 (1245 aa).

Disordered stretches follow at residues 1–87 (MRIG…LVPE) and 173–205 (CPQA…PTFL). Positions 67–87 (PRRPLPVAPASAPPAPSLVPE) are enriched in pro residues. The Nuclear localization signal 1 motif lies at 185-191 (RSARARR). A Cryptic repeat -1 repeat occupies 286 to 320 (LTRAHIVDIARQRSGDLALQALLPVATALTAAPLR). One copy of the Cryptic repeat 0 repeat lies at 321–354 (LSASQIATVAQYGERPAIQALYRLRRKLTRAPLH). 16 Core repeat repeats span residues 355–389 (LTPQ…APYR), 390–424 (LSTE…APYV), 425–459 (LDTE…APYA), 460–494 (LSTE…APYA), 495–529 (LSTE…VPYA), 530–564 (LSTE…APYA), 565–599 (LSTA…APYG), 600–634 (LSTE…APYA), 635–669 (LSTE…APYA), 670–704 (LSTA…APYA), 705–739 (LSTE…APYA), 740–774 (LNTE…APYA), 775–809 (LSTA…APYA), 810–844 (LSTE…APYG), 845–879 (LSTA…TPYD), and 880–914 (LNTA…APYA). The stretch at 915-948 (LSTAQVVAIACISGQQALEAIEAHMPTLRQASHS) is one Cryptic repeat +1 repeat. Residues 949–982 (LSPERVAAIACIGGRSAVEAVRQGLPVKAIRRIR) form a Cryptic repeat +2 repeat. 3 short sequence motifs (nuclear localization signal) span residues 980-983 (RIRR), 1108-1111 (HRKR), and 1145-1148 (RRKR). Residues 1096 to 1138 (SPGMAGQSACSPHRKRPAETAIAPRSIRRSPNNAGQPSEPWPD) are disordered. The tract at residues 1237–1245 (DWLLQILET) is activation domain.

Belongs to the transcription activator-like effector (TALE) family. RipTAL/RTL subfamily.

It localises to the secreted. It is found in the host nucleus. Its function is as follows. Exported into plant cells, where it is targeted to the nucleus and probably acts as a transcription factor. Binds DNA in a sequence-specific manner. May contribute to plant pathogenicity. The chain is TAL effector protein Brg11 from Ralstonia nicotianae (strain ATCC BAA-1114 / GMI1000) (Ralstonia solanacearum).